We begin with the raw amino-acid sequence, 307 residues long: tRNA pseudouridine synthase B (307 aa).

The Nucleophile role is filled by Asp38.

Belongs to the pseudouridine synthase TruB family. Type 1 subfamily.

It carries out the reaction uridine(55) in tRNA = pseudouridine(55) in tRNA. In terms of biological role, responsible for synthesis of pseudouridine from uracil-55 in the psi GC loop of transfer RNAs. This chain is tRNA pseudouridine synthase B, found in Bacillus thuringiensis (strain Al Hakam).